The sequence spans 28 residues: Probable small spore coat assembly protein B (28 aa).

The chain crosses the membrane as a helical span at residues 4–24; the sequence is VFAGGFALLVVLFILLIIIGA.

Belongs to the SscA family.

Its subcellular location is the membrane. The chain is Probable small spore coat assembly protein B from Bacillus subtilis (strain 168).